The chain runs to 358 residues: UDP-3-O-acylglucosamine N-acyltransferase (358 aa).

Histidine 248 serves as the catalytic Proton acceptor.

The protein belongs to the transferase hexapeptide repeat family. LpxD subfamily. Homotrimer.

The enzyme catalyses a UDP-3-O-[(3R)-3-hydroxyacyl]-alpha-D-glucosamine + a (3R)-hydroxyacyl-[ACP] = a UDP-2-N,3-O-bis[(3R)-3-hydroxyacyl]-alpha-D-glucosamine + holo-[ACP] + H(+). It participates in bacterial outer membrane biogenesis; LPS lipid A biosynthesis. Functionally, catalyzes the N-acylation of UDP-3-O-acylglucosamine using 3-hydroxyacyl-ACP as the acyl donor. Is involved in the biosynthesis of lipid A, a phosphorylated glycolipid that anchors the lipopolysaccharide to the outer membrane of the cell. The polypeptide is UDP-3-O-acylglucosamine N-acyltransferase (Synechococcus sp. (strain WH7803)).